We begin with the raw amino-acid sequence, 251 residues long: Cell division protein ZapD (251 aa).

This sequence belongs to the ZapD family. In terms of assembly, interacts with FtsZ.

It is found in the cytoplasm. Its function is as follows. Cell division factor that enhances FtsZ-ring assembly. Directly interacts with FtsZ and promotes bundling of FtsZ protofilaments, with a reduction in FtsZ GTPase activity. The sequence is that of Cell division protein ZapD from Burkholderia cenocepacia (strain HI2424).